The sequence spans 84 residues: Coiled-coil-helix-coiled-coil-helix domain-containing protein 7 (84 aa).

The CHCH domain maps to 12–54; the sequence is SNPCLEETDASTKCMDENQYQKDLCTSYFIKYKNCRKFWNGIM. Short sequence motifs (cx9C motif) lie at residues 15–25 and 36–46; these read CLEETDASTKC and CTSYFIKYKNC. 2 disulfides stabilise this stretch: C15–C46 and C25–C36.

The protein belongs to the CHCHD7 family.

The protein localises to the mitochondrion intermembrane space. The polypeptide is Coiled-coil-helix-coiled-coil-helix domain-containing protein 7 (chchd7) (Xenopus laevis (African clawed frog)).